The chain runs to 124 residues: Probable glycine cleavage system H protein (124 aa).

The Lipoyl-binding domain maps to 23-104 (VATVGITDYA…PYKNWLVKIR (82 aa)). Lys-64 bears the N6-lipoyllysine mark.

Belongs to the GcvH family. The glycine cleavage system is composed of four proteins: P, T, L and H. It depends on (R)-lipoate as a cofactor.

In terms of biological role, the glycine cleavage system catalyzes the degradation of glycine. The H protein shuttles the methylamine group of glycine from the P protein to the T protein. The chain is Probable glycine cleavage system H protein from Picrophilus torridus (strain ATCC 700027 / DSM 9790 / JCM 10055 / NBRC 100828 / KAW 2/3).